A 166-amino-acid polypeptide reads, in one-letter code: Vasopressin-neurophysin 2-copeptin (166 aa).

The first 19 residues, 1–19 (MPDATLPACFLSLLAFTSA), serve as a signal peptide directing secretion. Residues C20 and C25 are joined by a disulfide bond. At G28 the chain carries Glycine amide. Cystine bridges form between C41/C85, C44/C58, C52/C75, C59/C65, C92/C104, C98/C116, and C105/C110. N133 carries N-linked (GlcNAc...) asparagine glycosylation.

It belongs to the vasopressin/oxytocin family. As to quaternary structure, interacts with vasopressin receptors V1bR/AVPR1B (Ki=85 pM), V1aR/AVPR1A (Ki=0.6 nM) and V2R/AVPR2 (Ki=4.9 nM). Interacts with oxytocin receptor (OXTR) (Ki=110 nM).

The protein resides in the secreted. Its function is as follows. Neurophysin 2 specifically binds vasopressin. Vasopressin has a direct antidiuretic action on the kidney, it also causes vasoconstriction of the peripheral vessels. Acts by binding to vasopressin receptors (V1bR/AVPR1B, V1aR/AVPR1A, and V2R/AVPR2). This is Vasopressin-neurophysin 2-copeptin (AVP) from Bos taurus (Bovine).